The sequence spans 253 residues: Small ribosomal subunit protein eS4 (253 aa).

Residues 43 to 114 form the S4 RNA-binding domain; the sequence is LPLLLIVRNV…YPVKFFKLHP (72 aa).

It belongs to the eukaryotic ribosomal protein eS4 family.

The polypeptide is Small ribosomal subunit protein eS4 (rps4e) (Aeropyrum pernix (strain ATCC 700893 / DSM 11879 / JCM 9820 / NBRC 100138 / K1)).